Consider the following 188-residue polypeptide: Pyridoxal 5'-phosphate synthase subunit PdxT (188 aa).

L-glutamine is bound at residue 46–48 (GES). Residue Cys-78 is the Nucleophile of the active site. L-glutamine contacts are provided by residues Arg-106 and 132–133 (IR). Active-site charge relay system residues include His-169 and Glu-171.

Belongs to the glutaminase PdxT/SNO family. As to quaternary structure, in the presence of PdxS, forms a dodecamer of heterodimers. Only shows activity in the heterodimer.

It catalyses the reaction aldehydo-D-ribose 5-phosphate + D-glyceraldehyde 3-phosphate + L-glutamine = pyridoxal 5'-phosphate + L-glutamate + phosphate + 3 H2O + H(+). The enzyme catalyses L-glutamine + H2O = L-glutamate + NH4(+). It participates in cofactor biosynthesis; pyridoxal 5'-phosphate biosynthesis. Its function is as follows. Catalyzes the hydrolysis of glutamine to glutamate and ammonia as part of the biosynthesis of pyridoxal 5'-phosphate. The resulting ammonia molecule is channeled to the active site of PdxS. This is Pyridoxal 5'-phosphate synthase subunit PdxT from Tropheryma whipplei (strain TW08/27) (Whipple's bacillus).